Here is a 275-residue protein sequence, read N- to C-terminus: Nitrate import permease protein NrtB (275 aa).

The next 7 membrane-spanning stretches (helical) occupy residues 25 to 45 (VIRP…LCSG), 89 to 109 (VAVG…LIGS), 120 to 140 (IFQV…LAAL), 147 to 167 (AIFV…TVGA), 189 to 209 (FFNI…RIGI), 213 to 233 (WLAI…FFIW), and 238 to 258 (SSLI…GLLL). The region spanning 82-262 (IFASLTRVAV…IVGLLLDRFI (181 aa)) is the ABC transmembrane type-1 domain.

It belongs to the binding-protein-dependent transport system permease family. CysTW subfamily. The complex is composed of two ATP-binding proteins (NrtC and NrtD), two transmembrane proteins (NrtB) and a solute-binding protein (NrtA).

Its subcellular location is the cell inner membrane. In terms of biological role, part of the ABC transporter complex NrtABCD involved in nitrate uptake. The complex is probably also involved in nitrite transport. Probably responsible for the translocation of the substrate across the membrane. This chain is Nitrate import permease protein NrtB (nrtB), found in Synechocystis sp. (strain ATCC 27184 / PCC 6803 / Kazusa).